Consider the following 522-residue polypeptide: Sensory neuron membrane protein 1 (522 aa).

At 1–11 (MKLPKHLKFAA) the chain is on the cytoplasmic side. Residues 12–32 (GAGGAFLFGILFGWVMFPAIL) form a helical membrane-spanning segment. Topologically, residues 33-455 (KGQLKKEMAL…KFQLFYPKKA (423 aa)) are extracellular. N-linked (GlcNAc...) asparagine glycans are attached at residues Asn67 and Asn229. Disulfide bonds link Cys268–Cys333, Cys297–Cys350, and Cys335–Cys339. N-linked (GlcNAc...) asparagine glycosylation is present at Asn438. A helical transmembrane segment spans residues 456–476 (VGVIKWLLVTFGGFGLIGCTI). Topologically, residues 477-522 (YHYKDRIMSFASSPGSAAVTKVKPEEVEQKDVSVIGQPQEPAKINM) are cytoplasmic.

Belongs to the CD36 family.

The protein resides in the cell membrane. Functionally, plays an olfactory role that is not restricted to pheromone sensitivity. This Plutella xylostella (Diamondback moth) protein is Sensory neuron membrane protein 1.